The chain runs to 229 residues: Ras-related protein Rab-33B (229 aa).

Asparagine 43, valine 44, glycine 45, lysine 46, threonine 47, cysteine 48, threonine 62, and threonine 65 together coordinate GTP. Threonine 47 serves as a coordination point for Mg(2+). A Switch 1 motif is present at residues glycine 56–valine 68. Positions 65 and 88 each coordinate Mg(2+). A Switch 2 motif is present at residues threonine 89–histidine 108. GTP-binding residues include glycine 91, asparagine 148, lysine 149, aspartate 151, alanine 179, and lysine 180. Residues cysteine 227 and cysteine 229 are each lipidated (S-geranylgeranyl cysteine). Cysteine 229 carries the cysteine methyl ester modification.

Belongs to the small GTPase superfamily. Rab family. In terms of assembly, interacts (GTP- and GDP-bound forms) with ATG16L1; the complex consists of a tetramer where two RAB33B molecules bind independently one molecule of the ATG16L1 homodimer; the interaction promotes ATG12-ATG5-ATG16L1 complex recruitment to phagophores. Interacts with ATG16L2; however interaction is approximately hundred times lower than for ATG16L1. Interacts with RIC1 (via C-terminus domain); the interaction is direct with a preference for RAB33B-GTP. Interacts with RGP1. Mg(2+) is required as a cofactor. Prenylated.

It localises to the golgi apparatus membrane. It is found in the golgi apparatus. The protein localises to the cis-Golgi network. Its subcellular location is the preautophagosomal structure membrane. The enzyme catalyses GTP + H2O = GDP + phosphate + H(+). Its activity is regulated as follows. Regulated by guanine nucleotide exchange factors (GEFs) which promote the exchange of bound GDP for free GTP. Regulated by GTPase activating proteins (GAPs) such as SGSM2 which increase the GTP hydrolysis activity. Inhibited by GDP dissociation inhibitors (GDIs). Functionally, the small GTPases Rab are key regulators of intracellular membrane trafficking, from the formation of transport vesicles to their fusion with membranes. Rabs cycle between an inactive GDP-bound form and an active GTP-bound form that is able to recruit to membranes different sets of downstream effectors directly responsible for vesicle formation, movement, tethering and fusion. RAB33B acts, in coordination with RAB6A, to regulate intra-Golgi retrograde trafficking. Participates in autophagosome formation by recruiting the ATG12-ATG5-ATG16L1 complex to phagophores, probably in a nucleotide-independent manner. The polypeptide is Ras-related protein Rab-33B (RAB33B) (Pongo abelii (Sumatran orangutan)).